The following is a 201-amino-acid chain: Potassium-transporting ATPase KdpC subunit (201 aa).

A helical transmembrane segment spans residues 9–29; sequence ILVMLALTLITGLLYPLAMTV. 2 stretches are compositionally biased toward polar residues: residues 73–84 and 91–101; these read TTAADPNDSTKT and AANSSGSNLGP. The interval 73–103 is disordered; the sequence is TTAADPNDSTKTVPAPYNAANSSGSNLGPTS.

It belongs to the KdpC family. The system is composed of three essential subunits: KdpA, KdpB and KdpC.

It localises to the cell inner membrane. In terms of biological role, part of the high-affinity ATP-driven potassium transport (or Kdp) system, which catalyzes the hydrolysis of ATP coupled with the electrogenic transport of potassium into the cytoplasm. This subunit acts as a catalytic chaperone that increases the ATP-binding affinity of the ATP-hydrolyzing subunit KdpB by the formation of a transient KdpB/KdpC/ATP ternary complex. The sequence is that of Potassium-transporting ATPase KdpC subunit from Bradyrhizobium sp. (strain BTAi1 / ATCC BAA-1182).